A 115-amino-acid polypeptide reads, in one-letter code: Small ribosomal subunit protein bS6 (115 aa).

This sequence belongs to the bacterial ribosomal protein bS6 family.

Its function is as follows. Binds together with bS18 to 16S ribosomal RNA. The protein is Small ribosomal subunit protein bS6 of Syntrophotalea carbinolica (strain DSM 2380 / NBRC 103641 / GraBd1) (Pelobacter carbinolicus).